We begin with the raw amino-acid sequence, 354 residues long: Serum paraoxonase/arylesterase 2 (354 aa).

C42 and C352 are oxidised to a cystine. Positions 53 and 54 each coordinate Ca(2+). H114 functions as the Proton acceptor in the catalytic mechanism. Ca(2+)-binding residues include I116, N167, D168, and N223. The N-linked (GlcNAc...) asparagine glycan is linked to N254. Residues D268 and N269 each contribute to the Ca(2+) site. N-linked (GlcNAc...) asparagine glycosylation is found at N269 and N323.

The protein belongs to the paraoxonase family. As to quaternary structure, homotrimer. Ca(2+) serves as cofactor. In terms of processing, glycosylated. Post-translationally, the signal sequence is not cleaved.

The protein resides in the membrane. It carries out the reaction a phenyl acetate + H2O = a phenol + acetate + H(+). The enzyme catalyses an N-acyl-L-homoserine lactone + H2O = an N-acyl-L-homoserine + H(+). Capable of hydrolyzing lactones and a number of aromatic carboxylic acid esters. In Rattus norvegicus (Rat), this protein is Serum paraoxonase/arylesterase 2 (Pon2).